The sequence spans 193 residues: ATP-dependent Clp protease proteolytic subunit 1 (193 aa).

The active-site Nucleophile is serine 98. Histidine 123 is a catalytic residue.

It belongs to the peptidase S14 family. Fourteen ClpP subunits assemble into 2 heptameric rings which stack back to back to give a disk-like structure with a central cavity, resembling the structure of eukaryotic proteasomes.

The protein resides in the cytoplasm. The enzyme catalyses Hydrolysis of proteins to small peptides in the presence of ATP and magnesium. alpha-casein is the usual test substrate. In the absence of ATP, only oligopeptides shorter than five residues are hydrolyzed (such as succinyl-Leu-Tyr-|-NHMec, and Leu-Tyr-Leu-|-Tyr-Trp, in which cleavage of the -Tyr-|-Leu- and -Tyr-|-Trp bonds also occurs).. In terms of biological role, cleaves peptides in various proteins in a process that requires ATP hydrolysis. Has a chymotrypsin-like activity. Plays a major role in the degradation of misfolded proteins. In Bacillus anthracis, this protein is ATP-dependent Clp protease proteolytic subunit 1.